Consider the following 614-residue polypeptide: uncharacterized protein (614 aa).

The next 4 membrane-spanning stretches (helical) occupy residues 41–61 (GWIF…AVLF), 87–107 (LIGM…ASAV), 157–177 (DTVL…ITSG), and 178–198 (VVLV…IILF). The 288-residue stretch at 43–330 (IFLLAILTVG…IMWESARLFE (288 aa)) folds into the ABC transmembrane type-1 domain. The ABC transporter domain maps to 364 to 603 (IKFNDITFAY…NGLYAKLWNH (240 aa)). ATP is bound at residue 397-404 (GRSGAGKS).

This sequence belongs to the ABC transporter superfamily.

The protein resides in the cell membrane. This is an uncharacterized protein from Haemophilus influenzae (strain ATCC 51907 / DSM 11121 / KW20 / Rd).